The following is a 217-amino-acid chain: Photosynthetic NDH subunit of lumenal location 4, chloroplastic (217 aa).

The transit peptide at 1–34 (MAISTLTLTQSLYTRSFRPTIFFSSSSSSSFSCL) directs the protein to the chloroplast. Cystine bridges form between C87–C99 and C188–C193. The region spanning 112-211 (GVLVNIHYTA…LYDINFVEIY (100 aa)) is the PPIase FKBP-type domain.

The protein belongs to the FKBP-type PPIase family. Part of the chloroplast NDH complex, composed of a mixture of chloroplast and nucleus encoded subunits. Component of the NDH lumenal subcomplex, at least composed of PnsL1, PnsL2, PnsL3, PnsL4 and PnsL5.

The protein resides in the plastid. It localises to the chloroplast thylakoid lumen. The enzyme catalyses [protein]-peptidylproline (omega=180) = [protein]-peptidylproline (omega=0). In terms of biological role, NDH shuttles electrons from NAD(P)H:plastoquinone, via FMN and iron-sulfur (Fe-S) centers, to quinones in the photosynthetic chain and possibly in a chloroplast respiratory chain. The immediate electron acceptor for the enzyme in this species is believed to be plastoquinone. Couples the redox reaction to proton translocation, and thus conserves the redox energy in a proton gradient. PPIases accelerate the folding of proteins. It catalyzes the cis-trans isomerization of proline imidic peptide bonds in oligopeptides. Seems to be essential for stabilizing the NDH subcomplex A. The protein is Photosynthetic NDH subunit of lumenal location 4, chloroplastic of Arabidopsis thaliana (Mouse-ear cress).